The primary structure comprises 413 residues: Multifunctional CCA protein (413 aa).

Residues G8 and R11 each coordinate ATP. Residues G8 and R11 each contribute to the CTP site. D21 and D23 together coordinate Mg(2+). The ATP site is built by R91, R143, and R146. 3 residues coordinate CTP: R91, R143, and R146. One can recognise an HD domain in the interval 232–333; it reads TGVHVMMVVD…VRLFERSDAL (102 aa).

Belongs to the tRNA nucleotidyltransferase/poly(A) polymerase family. Bacterial CCA-adding enzyme type 1 subfamily. As to quaternary structure, monomer. Can also form homodimers and oligomers. Mg(2+) serves as cofactor. Requires Ni(2+) as cofactor.

The catalysed reaction is a tRNA precursor + 2 CTP + ATP = a tRNA with a 3' CCA end + 3 diphosphate. It carries out the reaction a tRNA with a 3' CCA end + 2 CTP + ATP = a tRNA with a 3' CCACCA end + 3 diphosphate. Catalyzes the addition and repair of the essential 3'-terminal CCA sequence in tRNAs without using a nucleic acid template. Adds these three nucleotides in the order of C, C, and A to the tRNA nucleotide-73, using CTP and ATP as substrates and producing inorganic pyrophosphate. tRNA 3'-terminal CCA addition is required both for tRNA processing and repair. Also involved in tRNA surveillance by mediating tandem CCA addition to generate a CCACCA at the 3' terminus of unstable tRNAs. While stable tRNAs receive only 3'-terminal CCA, unstable tRNAs are marked with CCACCA and rapidly degraded. The sequence is that of Multifunctional CCA protein from Burkholderia orbicola (strain MC0-3).